Here is a 621-residue protein sequence, read N- to C-terminus: Frizzled and smoothened-like protein H (621 aa).

Positions 1–21 (MNLKFYNLIFFISFLICCIHG) are cleaved as a signal peptide. Over 22 to 246 (QRYLPVEGGK…VWNQIFKIND (225 aa)) the chain is Extracellular. The FZ domain occupies 27–166 (VEGGKCEKYI…IEWVKYNLTI (140 aa)). Disulfide bonds link C32-C103 and C46-C96. 5 N-linked (GlcNAc...) asparagine glycosylation sites follow: N60, N107, N163, N176, and N206. The chain crosses the membrane as a helical span at residues 247 to 267 (VLSSISLACTLILLFTFGILN). Topologically, residues 268-277 (PKLNRFDKKN) are cytoplasmic. Residues 278-298 (LFFIAGVFGMSVSGVLIAANG) form a helical membrane-spanning segment. Residues 299 to 318 (SEKTVCPTPERYAVNTDRVC) are Extracellular-facing. A helical transmembrane segment spans residues 319–339 (VASGFLVHFSALFAILWWTIG). The Cytoplasmic segment spans residues 340-359 (LADVYYGIKFVGKKIKIKVR). A helical transmembrane segment spans residues 360–380 (YYLLATLTISLAFTLVPLGTG). Residues 381–400 (QYQAGLSNVMCFLKDEIYQS) lie on the Extracellular side of the membrane. Residues 401–421 (MTFFVPLGICLTMGTILMILV) form a helical membrane-spanning segment. The Cytoplasmic segment spans residues 422 to 464 (MREIYVIVKSNSTSSSFSSSSSKSKSKSKSSDSISYLKLQVKP). A helical transmembrane segment spans residues 465-485 (MLNIILFYFTFLYLFLFVRVI). The Extracellular portion of the chain corresponds to 486-520 (NSRYQEYEDSAIPYMLCLAKGGGDSCRLKGPSAGS). Residues 521–541 (LGYFAYCLRIYGIYLFIISFL) traverse the membrane as a helical segment. Over 542–621 (SSRTIKIWKE…RNYNTDDDDL (80 aa)) the chain is Cytoplasmic. The span at 575–594 (FSSSKNTSTTQNSTLNNTES) shows a compositional bias: low complexity. A disordered region spans residues 575–603 (FSSSKNTSTTQNSTLNNTESDTSKRGNSS).

It belongs to the G-protein coupled receptor Fz/Smo family.

It is found in the membrane. The protein is Frizzled and smoothened-like protein H (fslH) of Dictyostelium discoideum (Social amoeba).